We begin with the raw amino-acid sequence, 350 residues long: Trans-enoyl reductase iliB (350 aa).

Residue 50–53 participates in NADP(+) binding; the sequence is VDGK. 145 to 152 is a binding site for substrate; the sequence is AAIATVGL. Residues 177–180, Tyr195, and 242–243 contribute to the NADP(+) site; these read SAAS and LD. Substrate is bound at residue 262 to 266; the sequence is TPTQF. Position 331-332 (331-332) interacts with NADP(+); that stretch reads IK.

Belongs to the zinc-containing alcohol dehydrogenase family. As to quaternary structure, monomer.

It carries out the reaction N-[(4E,6E,10S,12Z,14E)-6,10-dimethyl-3-oxohexadeca-4,6,12,14-tetraenoyl]-L-tyrosyl-[ACP] = (3E,5S)-3-[(2E,4E,8S,10E,12Z)-1-hydroxy-4,8-dimethyltetradeca-2,4,10,12-tetraen-1-ylidene]-5-[(4-hydroxyphenyl)methyl]pyrrolidine-2,4-dione + holo-[ACP] + H(+). It participates in mycotoxin biosynthesis. Trans-enoyl reductase; part of the gene cluster that mediates the biosynthesis of ilicicolin H, a 4-hydroxy-2-pyridonealkaloid that has potent and broad antifungal activities by inhibiting the mitochondrial respiration chain. IliB collaborates with the hybrid PKS-NRPS synthetase iliA to assemble the backbone of ilicicolin H. The PKS portion of iliA and trans-acting enoyl reductase iliB work together to construct an octaketide, and two methyl groups are introduced by the MT domain of iliA during the chain assembly. The nascent chain is then condensed with tyrosine, catalyzed by the iliA C domain, and the resulting PKS-NRPS hybrid is offloaded by the iliA RED domain to form an advanced tetramic acid intermediate. The biosynthesis of ilicicolin H starts with formation of the tetramic acid by the hybrid PKS-NRPS synthetase iliA with the partnering trans-enoyl reductase iliB since iliA lacks a designated enoylreductase (ER) domain. The cytochrome P450 monooxygenase iliC then catalyzes the ring expansion of the tetramate to the acyclic 2-pyridone. The pericyclase iliD further converts the acyclic 2-pyridone into 8-epi-ilicicolin H. 8-epi-ilicicolin H might then spontaneously convert to ilicicolin H since ilicicolin H is produced in the absence of the epimerase iliE, in contrast to what was observed for the Talaromyces variabilis ilicolin H biosynthetic pathway. In Hypocrea jecorina (strain QM6a) (Trichoderma reesei), this protein is Trans-enoyl reductase iliB.